A 161-amino-acid polypeptide reads, in one-letter code: Allophycocyanin subunit alpha-B (161 aa).

N71 carries the post-translational modification N4-methylasparagine. Position 81 (C81) interacts with (2R,3E)-phycocyanobilin.

Belongs to the phycobiliprotein family. Heterohexamer of two alpha chains, one alpha-B chain and three beta chains. Post-translationally, contains one covalently linked phycocyanobilin chromophore. The chromophore is added by phycocyanobilin lyase CpcS 1.

Its subcellular location is the cellular thylakoid membrane. In terms of biological role, light-harvesting photosynthetic bile pigment-protein from the phycobiliprotein complex. Allophycocyanin has a maximum absorption at approximately 654 nanometers. This is Allophycocyanin subunit alpha-B (apcD) from Nostoc sp. (strain PCC 7120 / SAG 25.82 / UTEX 2576).